The following is a 197-amino-acid chain: Probable GTP-binding protein EngB (197 aa).

The 173-residue stretch at 25–197 (SAPEIAFAGR…VRDEFFKFTR (173 aa)) folds into the EngB-type G domain. Residues 33 to 40 (GRSNVGKS), 60 to 64 (GCTRQ), 79 to 82 (DLPG), 146 to 149 (TKID), and 177 to 179 (ISI) each bind GTP. 2 residues coordinate Mg(2+): Ser40 and Thr62.

The protein belongs to the TRAFAC class TrmE-Era-EngA-EngB-Septin-like GTPase superfamily. EngB GTPase family. Requires Mg(2+) as cofactor.

In terms of biological role, necessary for normal cell division and for the maintenance of normal septation. This is Probable GTP-binding protein EngB from Wolbachia pipientis subsp. Culex pipiens (strain wPip).